Consider the following 427-residue polypeptide: Trigger factor (427 aa).

One can recognise a PPIase FKBP-type domain in the interval 163–248 (GDIAVIDFKG…IKSIKVKELP (86 aa)).

Belongs to the FKBP-type PPIase family. Tig subfamily.

Its subcellular location is the cytoplasm. The enzyme catalyses [protein]-peptidylproline (omega=180) = [protein]-peptidylproline (omega=0). Its function is as follows. Involved in protein export. Acts as a chaperone by maintaining the newly synthesized protein in an open conformation. Functions as a peptidyl-prolyl cis-trans isomerase. In Clostridium beijerinckii (strain ATCC 51743 / NCIMB 8052) (Clostridium acetobutylicum), this protein is Trigger factor.